We begin with the raw amino-acid sequence, 136 residues long: Large ribosomal subunit protein bL17 (136 aa).

This sequence belongs to the bacterial ribosomal protein bL17 family. In terms of assembly, part of the 50S ribosomal subunit. Contacts protein L32.

The polypeptide is Large ribosomal subunit protein bL17 (Rhodopseudomonas palustris (strain BisB5)).